The chain runs to 561 residues: Mesoderm induction early response protein 2 (561 aa).

Disordered regions lie at residues 1-28 and 52-188; these read MAEASSLERQSPGAASCLPHSLCPGEPN and QNYG…EDPL. Residue S11 is modified to Phosphoserine. Residues 140-165 are compositionally biased toward polar residues; that stretch reads QSSADDLTPSVTSHEASDLFPSQSGS. Residues 195-292 enclose the ELM2 domain; that stretch reads KEIMVGPQFQ…EALRRLRFNV (98 aa). Positions 297–349 constitute an SANT domain; sequence DGLCAWSEEERRNFEHGFRVHGKNFHLIQANKVRTRSVGECVEYYYLWKKSER. Residues 360–515 are disordered; that stretch reads GRRKYGPSGN…DGEPEETVGP (156 aa). A compositionally biased stretch (low complexity) spans 417 to 428; that stretch reads LSMGSSMSRSLG. The segment covering 439-451 has biased composition (pro residues); sequence SSEPGPRLFPPLD. Residues 453–482 show a composition bias toward low complexity; the sequence is PSALPSSRRPPALAEPAFFPPATAAPEPGA.

As to quaternary structure, part of a complex containing at least CDYL, MIER1, MIER2, HDAC1 and HDAC2.

It localises to the nucleus. Functionally, transcriptional repressor. The polypeptide is Mesoderm induction early response protein 2 (MIER2) (Bos taurus (Bovine)).